The sequence spans 63 residues: Metallothionein (63 aa).

Residues 1 to 30 (MDPQDCTCAAGDSCSCAGSCKCKNCRCRSC) are beta. Residues C6, C8, C14, C16, C20, C22, C25, C27, C30, C34, C35, C37, C38, C42, C45, C49, C51, C59, C61, and C62 each coordinate a divalent metal cation. The interval 31-63 (RKSCCSCCPAGCNNCAKGCVCKEPASSKCSCCH) is alpha.

This sequence belongs to the metallothionein superfamily. Type 1 family.

In terms of biological role, metallothioneins have a high content of cysteine residues that bind various heavy metals. In Anas platyrhynchos (Mallard), this protein is Metallothionein.